The chain runs to 515 residues: Endoglucanase 23 (515 aa).

The first 29 residues, Met1–Ala29, serve as a signal peptide directing secretion. Asp95 (nucleophile) is an active-site residue. N-linked (GlcNAc...) asparagine glycosylation is found at Asn178, Asn375, and Asn384. The active site involves His426. Asn452 is a glycosylation site (N-linked (GlcNAc...) asparagine). Residues Asp477 and Glu486 contribute to the active site.

The protein belongs to the glycosyl hydrolase 9 (cellulase E) family.

The protein resides in the secreted. The enzyme catalyses Endohydrolysis of (1-&gt;4)-beta-D-glucosidic linkages in cellulose, lichenin and cereal beta-D-glucans.. The sequence is that of Endoglucanase 23 (GLU12) from Oryza sativa subsp. japonica (Rice).